The sequence spans 466 residues: MVDVLNIESLDLEARGIAHRDGKVLFVEGALPGERVTVQTVRRKPSYEIAKVEEVLRPSSQRVAPRCPHFGVCGGCAMQHLAPAAQVAIKQRALEDTFWHVGKLKPARILPPLYGPTWGYRYRARLSVRVVPKKGGVLVGFHERKSSYVADMRECHVLPPAVSRLLLPLRAMIAAMSAPDRMPQIEVALGDETIVLVLRHLLPLTDGDIAVLRAFAAEHGVQWWLQSKGPDTVHPLEREHADALAYTLPEFGLRMPYRPTDFTQVNHAINRAMVSRALKLLDVQPQDRVADLFCGLGNFTLPLATQGREAVGVEGSKALTDRAHEAAARHGLGERTRFATLNLFEVDVQWLRGLGYFDRMLIDPPREGAQAVAQALSLLAPGERPRRIVYVSCSPGTLARDAAIMVHEGGYALRSAGVINMFPHTGHVESIAVFESLDEATVLQAQAQARQKAREEAERLAEAAAA.

A TRAM domain is found at 1 to 54; the sequence is MVDVLNIESLDLEARGIAHRDGKVLFVEGALPGERVTVQTVRRKPSYEIAKVEE. 4 residues coordinate [4Fe-4S] cluster: C67, C73, C76, and C155. Q264, F293, N298, E314, N342, and D363 together coordinate S-adenosyl-L-methionine. The active-site Nucleophile is C393.

Belongs to the class I-like SAM-binding methyltransferase superfamily. RNA M5U methyltransferase family. RlmD subfamily.

The catalysed reaction is uridine(1939) in 23S rRNA + S-adenosyl-L-methionine = 5-methyluridine(1939) in 23S rRNA + S-adenosyl-L-homocysteine + H(+). Its function is as follows. Catalyzes the formation of 5-methyl-uridine at position 1939 (m5U1939) in 23S rRNA. This Bordetella pertussis (strain Tohama I / ATCC BAA-589 / NCTC 13251) protein is 23S rRNA (uracil(1939)-C(5))-methyltransferase RlmD.